A 274-amino-acid chain; its full sequence is NADPH-dependent 7-cyano-7-deazaguanine reductase (274 aa).

Substrate is bound at residue 80–82; it reads VES. 82–83 contacts NADPH; sequence SK. Cysteine 181 acts as the Thioimide intermediate in catalysis. Aspartate 188 acts as the Proton donor in catalysis. Residue 220–221 participates in substrate binding; the sequence is HE. NADPH is bound at residue 249–250; it reads RG.

This sequence belongs to the GTP cyclohydrolase I family. QueF type 2 subfamily. As to quaternary structure, homodimer.

It is found in the cytoplasm. It catalyses the reaction 7-aminomethyl-7-carbaguanine + 2 NADP(+) = 7-cyano-7-deazaguanine + 2 NADPH + 3 H(+). Its pathway is tRNA modification; tRNA-queuosine biosynthesis. Its function is as follows. Catalyzes the NADPH-dependent reduction of 7-cyano-7-deazaguanine (preQ0) to 7-aminomethyl-7-deazaguanine (preQ1). This chain is NADPH-dependent 7-cyano-7-deazaguanine reductase, found in Burkholderia vietnamiensis (strain G4 / LMG 22486) (Burkholderia cepacia (strain R1808)).